A 1906-amino-acid chain; its full sequence is Alpha-2-macroglobulin homolog (1906 aa).

Residues 1-21 form the signal peptide; it reads MIIRVCIRCFIVLTLVLGIGG. Cys-22 carries N-palmitoyl cysteine lipidation. Cys-22 is lipidated: S-diacylglycerol cysteine.

It belongs to the protease inhibitor I39 (alpha-2-macroglobulin) family. Bacterial alpha-2-macroglobulin subfamily.

Its subcellular location is the cell membrane. This Nostoc sp. (strain PCC 7120 / SAG 25.82 / UTEX 2576) protein is Alpha-2-macroglobulin homolog.